Here is a 252-residue protein sequence, read N- to C-terminus: D-aminoacyl-tRNA deacylase (252 aa).

This sequence belongs to the DtdA deacylase family. Monomer. Zn(2+) is required as a cofactor.

It catalyses the reaction a D-aminoacyl-tRNA + H2O = a tRNA + a D-alpha-amino acid + H(+). It carries out the reaction glycyl-tRNA(Ala) + H2O = tRNA(Ala) + glycine + H(+). In terms of biological role, D-aminoacyl-tRNA deacylase with broad substrate specificity. By recycling D-aminoacyl-tRNA to D-amino acids and free tRNA molecules, this enzyme counteracts the toxicity associated with the formation of D-aminoacyl-tRNA entities in vivo. In Pyrobaculum islandicum (strain DSM 4184 / JCM 9189 / GEO3), this protein is D-aminoacyl-tRNA deacylase.